The sequence spans 946 residues: Inter-alpha-trypsin inhibitor heavy chain H2 (946 aa).

A signal peptide spans 1–18 (MQRPVCLLIWLFLLEAQA). Residues 19-54 (FEIPINGNSEFAEYSDLVELAPDKLPFVQENGRHQR) constitute a propeptide that is removed on maturation. Residues 56–185 (LPEESGEETD…KVQFELHYQE (130 aa)) enclose the VIT domain. Ser60 carries the phosphoserine modification. Asn118 and Asn263 each carry an N-linked (GlcNAc...) asparagine glycan. Glu282 and Glu283 each carry 4-carboxyglutamate. A VWFA domain is found at 308–468 (PKNILFVIDV…YDFLKRLSNE (161 aa)). Asn445 carries an N-linked (GlcNAc...) asparagine glycan. A Phosphoserine modification is found at Ser466. Asp702 bears the Aspartate 1-(chondroitin 4-sulfate)-ester mark. The propeptide occupies 703–946 (PHFIIYLPKS…PQLYSFLKRP (244 aa)). A Phosphoserine modification is found at Ser886.

Belongs to the ITIH family. I-alpha-I plasma protease inhibitors are assembled from one or two heavy chains (HC) and one light chain, bikunin. Inter-alpha-inhibitor (I-alpha-I) is composed of ITIH1/HC1, ITIH2/HC2 and bikunin. In terms of processing, heavy chains are linked to bikunin via chondroitin 4-sulfate esterified to the alpha-carboxyl of the C-terminal aspartate after propeptide cleavage. Post-translationally, phosphorylated by FAM20C in the extracellular medium. As to expression, expressed in both liver and brain.

The protein localises to the secreted. In terms of biological role, may act as a carrier of hyaluronan in serum or as a binding protein between hyaluronan and other matrix protein, including those on cell surfaces in tissues to regulate the localization, synthesis and degradation of hyaluronan which are essential to cells undergoing biological processes. The sequence is that of Inter-alpha-trypsin inhibitor heavy chain H2 (Itih2) from Mus musculus (Mouse).